The sequence spans 775 residues: Isopimaradiene synthase (775 aa).

A chloroplast-targeting transit peptide spans 1–36 (MFSSSLKLKTNPLMDNKIHRSSSDRDFRGSTISSVK). Residues Asp525, Asp529, Asn669, Gln672, and Glu677 each coordinate Mg(2+). Residues 525-529 (DDFFD) carry the DDXXD motif motif.

The protein belongs to the terpene synthase family. It depends on Mg(2+) as a cofactor. As to expression, ubiquitous expression in roots, stems, leaves and flowers.

It is found in the plastid. The protein localises to the chloroplast. It catalyses the reaction (+)-copalyl diphosphate = isopimara-8(14),15-diene + diphosphate. The protein operates within secondary metabolite biosynthesis; terpenoid biosynthesis. Functionally, involved in the biosynthesis of ent-kaurene diterpenoids natural products such as oridonin, miltiradiene, eriocalyxin B and nezukol, known to exhibit antitumor, anti-inflammatory and antibacterial activities. Catalyzes the conversion of (+)-copalyl diphosphate ((+)-CPP) to isopimaradiene. This chain is Isopimaradiene synthase, found in Isodon rubescens (Rabdosia rubescens).